A 203-amino-acid chain; its full sequence is Peptidyl-tRNA hydrolase (203 aa).

A tRNA-binding site is contributed by tyrosine 26. Histidine 31 acts as the Proton acceptor in catalysis. TRNA contacts are provided by tyrosine 82, asparagine 84, and asparagine 130.

The protein belongs to the PTH family. As to quaternary structure, monomer.

Its subcellular location is the cytoplasm. The catalysed reaction is an N-acyl-L-alpha-aminoacyl-tRNA + H2O = an N-acyl-L-amino acid + a tRNA + H(+). In terms of biological role, hydrolyzes ribosome-free peptidyl-tRNAs (with 1 or more amino acids incorporated), which drop off the ribosome during protein synthesis, or as a result of ribosome stalling. Catalyzes the release of premature peptidyl moieties from peptidyl-tRNA molecules trapped in stalled 50S ribosomal subunits, and thus maintains levels of free tRNAs and 50S ribosomes. This chain is Peptidyl-tRNA hydrolase, found in Streptomyces avermitilis (strain ATCC 31267 / DSM 46492 / JCM 5070 / NBRC 14893 / NCIMB 12804 / NRRL 8165 / MA-4680).